Reading from the N-terminus, the 256-residue chain is Small ribosomal subunit protein uS2 (256 aa).

The tract at residues 229–256 (PVDDNGDYGDFDEAIDEYADETDASESE) is disordered. The segment covering 232 to 256 (DNGDYGDFDEAIDEYADETDASESE) has biased composition (acidic residues).

Belongs to the universal ribosomal protein uS2 family.

This chain is Small ribosomal subunit protein uS2, found in Picosynechococcus sp. (strain ATCC 27264 / PCC 7002 / PR-6) (Agmenellum quadruplicatum).